Reading from the N-terminus, the 90-residue chain is Probable Fe(2+)-trafficking protein (90 aa).

It belongs to the Fe(2+)-trafficking protein family.

Could be a mediator in iron transactions between iron acquisition and iron-requiring processes, such as synthesis and/or repair of Fe-S clusters in biosynthetic enzymes. This Pseudomonas fluorescens (strain Pf0-1) protein is Probable Fe(2+)-trafficking protein.